The following is a 397-amino-acid chain: Serpin B10 (397 aa).

The Nuclear localization signal motif lies at 74 to 77 (KKRK).

Belongs to the serpin family. Ov-serpin subfamily.

The protein resides in the nucleus. It is found in the cytoplasm. In terms of biological role, protease inhibitor that may play a role in the regulation of protease activities during hematopoiesis and apoptosis induced by TNF. May regulate protease activities in the cytoplasm and in the nucleus. The polypeptide is Serpin B10 (Serpinb10) (Mus musculus (Mouse)).